The chain runs to 66 residues: UPF0337 protein SAG0619 (66 aa).

The tract at residues 1–22 (MSQEKLKSKLDQAKGGAKEGFG) is disordered.

This sequence belongs to the UPF0337 (CsbD) family.

The chain is UPF0337 protein SAG0619 from Streptococcus agalactiae serotype V (strain ATCC BAA-611 / 2603 V/R).